The chain runs to 102 residues: Urease subunit beta (102 aa).

The protein belongs to the urease beta subunit family. In terms of assembly, heterotrimer of UreA (gamma), UreB (beta) and UreC (alpha) subunits. Three heterotrimers associate to form the active enzyme.

It localises to the cytoplasm. It carries out the reaction urea + 2 H2O + H(+) = hydrogencarbonate + 2 NH4(+). The protein operates within nitrogen metabolism; urea degradation; CO(2) and NH(3) from urea (urease route): step 1/1. This Methylobacillus flagellatus (strain ATCC 51484 / DSM 6875 / VKM B-1610 / KT) protein is Urease subunit beta.